The following is a 986-amino-acid chain: Ephrin type-A receptor 4 (986 aa).

The first 19 residues, Met-1 to Ala-19, serve as a signal peptide directing secretion. The Extracellular portion of the chain corresponds to Val-20 to Thr-547. The 180-residue stretch at Glu-30 to Arg-209 folds into the Eph LBD domain. 3 N-linked (GlcNAc...) asparagine glycosylation sites follow: Asn-235, Asn-340, and Asn-408. Fibronectin type-III domains lie at Pro-328–Ala-439 and Ala-440–Ser-537. The helical transmembrane segment at Val-548–Ile-569 threads the bilayer. Over Ser-570–Val-986 the chain is Cytoplasmic. Residues Tyr-596 and Tyr-602 each carry the phosphotyrosine; by autocatalysis modification. The Protein kinase domain occupies Ile-621 to Ile-882. Residues Ile-627–Val-635 and Lys-653 contribute to the ATP site. Asp-746 functions as the Proton acceptor in the catalytic mechanism. Residues Tyr-779 and Tyr-928 each carry the phosphotyrosine; by autocatalysis modification. Residues Ser-911 to Gln-975 form the SAM domain. A PDZ-binding motif is present at residues Val-984 to Val-986.

The protein belongs to the protein kinase superfamily. Tyr protein kinase family. Ephrin receptor subfamily. As to quaternary structure, heterotetramer upon binding of the ligand. The heterotetramer is composed of an ephrin dimer and a receptor dimer. Oligomerization is probably required to induce biological responses. Interacts (phosphorylated at position Tyr-602) with FYN. Interacts (via PDZ motif) with SIPA1L1 (via PDZ domain); controls neuronal morphology through regulation of the RAP1 (RAP1A or RAP1B) and RAP2 (RAP2A, RAP2B or RAP2C) GTPases. Interacts with CDK5, CDK5R1 and NGEF; upon activation by EFNA1 induces NGEF phosphorylation by the kinase CDK5. Interacts with CHN1; effector of EPHA4 in axon guidance linking EPHA4 activation to RAC1 regulation. Forms a ternary complex composed of ADAM10, CADH1 and EPHA4; within the complex, CADH1 is cleaved by ADAM10 which disrupts adherens junctions. As to expression, expressed in inner and outer pillar cells of the organ of Corti (at protein level). Highest expression in the adult brain and retina and also detectable in kidney, lung, skeletal muscle and thymus. Not detected in heart and liver. Expressed in myogenic progenitor cells.

The protein localises to the cell membrane. It localises to the cell projection. The protein resides in the axon. It is found in the dendrite. Its subcellular location is the postsynaptic density membrane. The protein localises to the early endosome. It localises to the cell junction. The protein resides in the adherens junction. It carries out the reaction L-tyrosyl-[protein] + ATP = O-phospho-L-tyrosyl-[protein] + ADP + H(+). In terms of biological role, receptor tyrosine kinase which binds membrane-bound ephrin family ligands residing on adjacent cells, leading to contact-dependent bidirectional signaling into neighboring cells. The signaling pathway downstream of the receptor is referred to as forward signaling while the signaling pathway downstream of the ephrin ligand is referred to as reverse signaling. Highly promiscuous, it has the unique property among Eph receptors to bind and to be physiologically activated by both GPI-anchored ephrin-A and transmembrane ephrin-B ligands including EFNA1 and EFNB3. Upon activation by ephrin ligands, modulates cell morphology and integrin-dependent cell adhesion through regulation of the Rac, Rap and Rho GTPases activity. Plays an important role in the development of the nervous system controlling different steps of axonal guidance including the establishment of the corticospinal projections. May also control the segregation of motor and sensory axons during neuromuscular circuit developmen. In addition to its role in axonal guidance plays a role in synaptic plasticity. Activated by EFNA1 phosphorylates CDK5 at 'Tyr-15' which in turn phosphorylates NGEF regulating RHOA and dendritic spine morphogenesis. In the nervous system, also plays a role in repair after injury preventing axonal regeneration and in angiogenesis playing a role in central nervous system vascular formation. Additionally, its promiscuity makes it available to participate in a variety of cell-cell signaling regulating for instance the development of the thymic epithelium. During development of the cochlear organ of Corti, regulates pillar cell separation by forming a ternary complex with ADAM10 and CADH1 which facilitates the cleavage of CADH1 by ADAM10 and disruption of adherens junctions. Phosphorylates CAPRIN1, promoting CAPRIN1-dependent formation of a membraneless compartment. In Mus musculus (Mouse), this protein is Ephrin type-A receptor 4 (Epha4).